Here is a 75-residue protein sequence, read N- to C-terminus: Small ribosomal subunit protein bS18 (75 aa).

This sequence belongs to the bacterial ribosomal protein bS18 family. In terms of assembly, part of the 30S ribosomal subunit. Forms a tight heterodimer with protein bS6.

In terms of biological role, binds as a heterodimer with protein bS6 to the central domain of the 16S rRNA, where it helps stabilize the platform of the 30S subunit. This is Small ribosomal subunit protein bS18 from Cereibacter sphaeroides (strain KD131 / KCTC 12085) (Rhodobacter sphaeroides).